Here is a 292-residue protein sequence, read N- to C-terminus: Protease HtpX homolog (292 aa).

2 helical membrane passes run 9–29 (TGVLMAFLTGLLMAIGYVLGN) and 31–51 (TGMMFAFMFALVMNFFSYWYS). A Zn(2+)-binding site is contributed by His-133. Glu-134 is an active-site residue. His-137 is a binding site for Zn(2+). The next 2 membrane-spanning stretches (helical) occupy residues 148 to 168 (LAAVMAGAIMMVARWAGWMLW) and 185 to 205 (LGAILLIVLAPIAAMLIQMAI). Glu-210 is a Zn(2+) binding site.

It belongs to the peptidase M48B family. Zn(2+) is required as a cofactor.

The protein resides in the cell membrane. The chain is Protease HtpX homolog from Thermococcus sibiricus (strain DSM 12597 / MM 739).